We begin with the raw amino-acid sequence, 448 residues long: tRNA modification GTPase MnmE (448 aa).

(6S)-5-formyl-5,6,7,8-tetrahydrofolate is bound by residues Arg-24, Glu-81, and Lys-120. Residues 216-373 (GLNVVLVGAP…LKRTLLREAG (158 aa)) enclose the TrmE-type G domain. Asn-226 contacts K(+). GTP is bound by residues 226-231 (NVGKSS), 245-251 (TDIAGTT), and 270-273 (DTAG). Ser-230 contacts Mg(2+). Residues Thr-245, Ile-247, and Thr-250 each contribute to the K(+) site. Thr-251 is a Mg(2+) binding site. Lys-448 is a binding site for (6S)-5-formyl-5,6,7,8-tetrahydrofolate.

Belongs to the TRAFAC class TrmE-Era-EngA-EngB-Septin-like GTPase superfamily. TrmE GTPase family. Homodimer. Heterotetramer of two MnmE and two MnmG subunits. The cofactor is K(+).

It is found in the cytoplasm. In terms of biological role, exhibits a very high intrinsic GTPase hydrolysis rate. Involved in the addition of a carboxymethylaminomethyl (cmnm) group at the wobble position (U34) of certain tRNAs, forming tRNA-cmnm(5)s(2)U34. This Neisseria meningitidis serogroup B (strain ATCC BAA-335 / MC58) protein is tRNA modification GTPase MnmE.